The following is a 231-amino-acid chain: Large ribosomal subunit protein uL1 (231 aa).

This sequence belongs to the universal ribosomal protein uL1 family. Part of the 50S ribosomal subunit.

Binds directly to 23S rRNA. The L1 stalk is quite mobile in the ribosome, and is involved in E site tRNA release. In terms of biological role, protein L1 is also a translational repressor protein, it controls the translation of the L11 operon by binding to its mRNA. This chain is Large ribosomal subunit protein uL1, found in Halorhodospira halophila (strain DSM 244 / SL1) (Ectothiorhodospira halophila (strain DSM 244 / SL1)).